Reading from the N-terminus, the 297-residue chain is Formylmethanofuran--tetrahydromethanopterin formyltransferase (297 aa).

This sequence belongs to the FTR family. In terms of assembly, homotetramer.

Its subcellular location is the cytoplasm. It carries out the reaction N-formylmethanofuran + 5,6,7,8-tetrahydromethanopterin + H(+) = N(5)-formyl-5,6,7,8-tetrahydromethanopterin + methanofuran. Its pathway is one-carbon metabolism; methanogenesis from CO(2); 5,10-methenyl-5,6,7,8-tetrahydromethanopterin from CO(2): step 2/3. Its function is as follows. Catalyzes the reversible transfer of a formyl group from formylmethanofuran (formyl-MFR) to tetrahydromethanopterin (H(4)MPT) to produce 5-formyl tetrahydromethanopterin (5-formyl-H(4)MPT) and methanofuran (MFR). The chain is Formylmethanofuran--tetrahydromethanopterin formyltransferase from Methanococcoides burtonii (strain DSM 6242 / NBRC 107633 / OCM 468 / ACE-M).